The chain runs to 138 residues: Putative membrane protein insertion efficiency factor (138 aa).

The interval 71-138 (YDPVPGTPEA…GTPSHTRGEN (68 aa)) is disordered. Positions 81-113 (RQWRELHPETARSKNEPIHDLTDDNPRDHEPAL) are enriched in basic and acidic residues. The span at 123-138 (PGSTHTGTPSHTRGEN) shows a compositional bias: polar residues.

It belongs to the UPF0161 family.

The protein localises to the cell membrane. Its function is as follows. Could be involved in insertion of integral membrane proteins into the membrane. This is Putative membrane protein insertion efficiency factor from Cutibacterium acnes (strain DSM 16379 / KPA171202) (Propionibacterium acnes).